Reading from the N-terminus, the 257-residue chain is Proteasome assembly chaperone 1 (257 aa).

The protein belongs to the PSMG1 family. As to quaternary structure, forms a heterodimer with psmg2.

Functionally, chaperone protein which promotes assembly of the 20S proteasome as part of a heterodimer with psmg2. The sequence is that of Proteasome assembly chaperone 1 (psmg1) from Nematostella vectensis (Starlet sea anemone).